Here is a 210-residue protein sequence, read N- to C-terminus: T-cell surface glycoprotein CD8 beta-2 chain (210 aa).

Positions 1 to 18 are cleaved as a signal peptide; sequence MRPRLWLLLAAQLTVLHG. Residues 19–132 enclose the Ig-like V-type domain; it reads NSVLQQTPAY…ELTFGKGTQL (114 aa). Residues 19-170 are Extracellular-facing; that stretch reads NSVLQQTPAY…ETQKGPLCSP (152 aa). Cysteine 41 and cysteine 116 form a disulfide bridge. The N-linked (GlcNAc...) asparagine glycan is linked to asparagine 102. A helical membrane pass occupies residues 171 to 191; the sequence is VTLGLLVAGVLVLLVSLGVAM. Topologically, residues 192-210 are cytoplasmic; sequence HLCCRRRRARLRFMKQFYK.

As to quaternary structure, in general heterodimer of an alpha and a beta chain linked by two disulfide bonds.

The protein resides in the cell membrane. Identifies cytotoxic/suppressor T-cells that interact with MHC class I bearing targets. CD8 is thought to play a role in the process of T-cell mediated killing. The sequence is that of T-cell surface glycoprotein CD8 beta-2 chain from Homo sapiens (Human).